A 120-amino-acid chain; its full sequence is Holo-[acyl-carrier-protein] synthase (120 aa).

Mg(2+) contacts are provided by Asp-8 and Glu-60.

This sequence belongs to the P-Pant transferase superfamily. AcpS family. Requires Mg(2+) as cofactor.

It localises to the cytoplasm. It carries out the reaction apo-[ACP] + CoA = holo-[ACP] + adenosine 3',5'-bisphosphate + H(+). Its function is as follows. Transfers the 4'-phosphopantetheine moiety from coenzyme A to a Ser of acyl-carrier-protein. The sequence is that of Holo-[acyl-carrier-protein] synthase from Anaplasma marginale (strain Florida).